Reading from the N-terminus, the 78-residue chain is Large ribosomal subunit protein bL28 (78 aa).

A disordered region spans residues 1-20 (MSRVCQVTGKRPVTGNNRSH).

It belongs to the bacterial ribosomal protein bL28 family.

The sequence is that of Large ribosomal subunit protein bL28 from Vibrio atlanticus (strain LGP32) (Vibrio splendidus (strain Mel32)).